The sequence spans 155 residues: DNA gyrase inhibitor (155 aa).

It belongs to the DNA gyrase inhibitor family. As to quaternary structure, interacts with DNA gyrase.

It localises to the cytoplasm. Functionally, inhibits the supercoiling activity of DNA gyrase. Acts by inhibiting DNA gyrase at an early step, prior to (or at the step of) binding of DNA by the gyrase. It protects cells against toxins that target DNA gyrase, by inhibiting activity of these toxins and reducing the formation of lethal double-strand breaks in the cell. In Escherichia fergusonii (strain ATCC 35469 / DSM 13698 / CCUG 18766 / IAM 14443 / JCM 21226 / LMG 7866 / NBRC 102419 / NCTC 12128 / CDC 0568-73), this protein is DNA gyrase inhibitor.